Consider the following 210-residue polypeptide: Small ribosomal subunit protein eS8y (210 aa).

The interval 1 to 22 (MGISRDSIHKRRATGGKQKMWR) is disordered. Residues 8-22 (IHKRRATGGKQKMWR) are compositionally biased toward basic residues.

The protein belongs to the eukaryotic ribosomal protein eS8 family.

In Arabidopsis thaliana (Mouse-ear cress), this protein is Small ribosomal subunit protein eS8y (RPS8B).